Consider the following 218-residue polypeptide: Dehydration-responsive element-binding protein 1B (218 aa).

Residues 1 to 26 are disordered; the sequence is MEVEEAAYRTVWSEPPKRPAGRTKFR. Residues 32–95 constitute a DNA-binding region (AP2/ERF); sequence VYRGVRRRGG…RGRAACLNFA (64 aa). Residues 131–151 form a disordered region; it reads SAAPSSPAETFADDGDEEEDN. Residues 141 to 151 show a composition bias toward acidic residues; sequence FADDGDEEEDN.

This sequence belongs to the AP2/ERF transcription factor family. ERF subfamily.

It is found in the nucleus. Its function is as follows. Transcriptional activator that binds specifically to the DNA sequence 5'-[AG]CCGAC-3'. Binding to the C-repeat/DRE element mediates high salinity- and dehydration-inducible transcription. Confers resistance to high salt, cold and drought stress. The protein is Dehydration-responsive element-binding protein 1B (DREB1B) of Oryza sativa subsp. indica (Rice).